A 525-amino-acid polypeptide reads, in one-letter code: Serine/threonine protein phosphatase 2A 55 kDa regulatory subunit B beta isoform (525 aa).

The disordered stretch occupies residues 1-30 (MDPSSKSPDDDDLRPEAEAARRPQPQPQPR). 2 WD repeats span residues 48-87 (QEVDIISAIEFDKSGDHLATGDRGGRVVLFERTDSRDSAS) and 124-165 (EIEE…VKRI). A disordered region spans residues 169 to 191 (NLNTSQSSGNGTTSSSSSSSSRA). The span at 171–189 (NTSQSSGNGTTSSSSSSSS) shows a compositional bias: low complexity. WD repeat units follow at residues 244–282 (AHDYHINSISNNSDGETYISADDLRINLWNLEISNQSFN), 293–333 (DLTE…LCDN), 352–390 (EIIASVSDIKFARDGRHILSRDYMTLKLWDINMDSGPVA), and 495–525 (DLSTKLLHLAWHPTENSIACAAANSLYMYYA).

Belongs to the phosphatase 2A regulatory subunit B family. In terms of assembly, PP2A consists of a common heteromeric enzyme, composed of a catalytic subunit (subunits C), a constant regulatory subunit (subunit A), and a variety of regulatory subunits such as subunits B (the R2/B/PR55/B55, R3/B''/PR72/PR130/PR59 and R5/B'/B56 families).

The B regulatory subunit may modulate substrate selectivity and catalytic activity, and may also direct the localization of the catalytic enzyme to a particular subcellular compartment. The protein is Serine/threonine protein phosphatase 2A 55 kDa regulatory subunit B beta isoform of Oryza sativa subsp. japonica (Rice).